The chain runs to 330 residues: MMEKYHETDADLKDLSGKTIAVIGYGSQGRGQSRNLKDSGLNVIIGIRAGKSRDLAKSDGFETYDVAEAAKKGDVIMILVPDENQAAVYKAEIMPYLTENKCLMFSHGFNIHFGQIVPPANVDVIMVAPKGPGHMVRRTYEEGKGVPALIAIEQDHTGNAKKLALAYAKGIGATRAVVLETTFREETETDLFGEQAVLCGGVTSLIKAGFDTLVDAGYAPEMAYLEVLHEMKLIVDLIYEGGFTKMREAISNTAQYGDITRGPRVIGNESYEAMREILYEIQSGEFAKEWILENMVNRPTFTALTRADEEHLIEEVGSELRAMMPQFKKN.

Residues 2–181 (MEKYHETDAD…GATRAVVLET (180 aa)) form the KARI N-terminal Rossmann domain. NADP(+)-binding positions include 25–28 (YGSQ), Arg-48, Ser-52, and 82–85 (DENQ). Residue His-107 is part of the active site. An NADP(+)-binding site is contributed by Gly-133. One can recognise a KARI C-terminal knotted domain in the interval 182–327 (TFREETETDL…SELRAMMPQF (146 aa)). Residues Asp-190, Glu-194, Glu-226, and Glu-230 each coordinate Mg(2+). Ser-251 provides a ligand contact to substrate.

Belongs to the ketol-acid reductoisomerase family. Mg(2+) serves as cofactor.

The enzyme catalyses (2R)-2,3-dihydroxy-3-methylbutanoate + NADP(+) = (2S)-2-acetolactate + NADPH + H(+). The catalysed reaction is (2R,3R)-2,3-dihydroxy-3-methylpentanoate + NADP(+) = (S)-2-ethyl-2-hydroxy-3-oxobutanoate + NADPH + H(+). It functions in the pathway amino-acid biosynthesis; L-isoleucine biosynthesis; L-isoleucine from 2-oxobutanoate: step 2/4. The protein operates within amino-acid biosynthesis; L-valine biosynthesis; L-valine from pyruvate: step 2/4. Its function is as follows. Involved in the biosynthesis of branched-chain amino acids (BCAA). Catalyzes an alkyl-migration followed by a ketol-acid reduction of (S)-2-acetolactate (S2AL) to yield (R)-2,3-dihydroxy-isovalerate. In the isomerase reaction, S2AL is rearranged via a Mg-dependent methyl migration to produce 3-hydroxy-3-methyl-2-ketobutyrate (HMKB). In the reductase reaction, this 2-ketoacid undergoes a metal-dependent reduction by NADPH to yield (R)-2,3-dihydroxy-isovalerate. The sequence is that of Ketol-acid reductoisomerase (NADP(+)) from Methanocorpusculum labreanum (strain ATCC 43576 / DSM 4855 / Z).